We begin with the raw amino-acid sequence, 439 residues long: tRNA-2-methylthio-N(6)-dimethylallyladenosine synthase (439 aa).

The MTTase N-terminal domain maps to 2-119 (KKLYLKTHGC…LPDLLDSVIQ (118 aa)). Residues C11, C48, C82, C156, C160, and C163 each contribute to the [4Fe-4S] cluster site. Positions 142 to 374 (RAEGPSAFVS…QNRINVKAAE (233 aa)) constitute a Radical SAM core domain. Positions 377 to 439 (QSMVGTQQRI…RPYSLWGEIC (63 aa)) constitute a TRAM domain.

This sequence belongs to the methylthiotransferase family. MiaB subfamily. Monomer. Requires [4Fe-4S] cluster as cofactor.

The protein resides in the cytoplasm. It catalyses the reaction N(6)-dimethylallyladenosine(37) in tRNA + (sulfur carrier)-SH + AH2 + 2 S-adenosyl-L-methionine = 2-methylsulfanyl-N(6)-dimethylallyladenosine(37) in tRNA + (sulfur carrier)-H + 5'-deoxyadenosine + L-methionine + A + S-adenosyl-L-homocysteine + 2 H(+). Catalyzes the methylthiolation of N6-(dimethylallyl)adenosine (i(6)A), leading to the formation of 2-methylthio-N6-(dimethylallyl)adenosine (ms(2)i(6)A) at position 37 in tRNAs that read codons beginning with uridine. This Coxiella burnetii (strain Dugway 5J108-111) protein is tRNA-2-methylthio-N(6)-dimethylallyladenosine synthase.